The primary structure comprises 422 residues: Serine--tRNA ligase (422 aa).

229–231 (TAE) serves as a coordination point for L-serine. An ATP-binding site is contributed by 260 to 262 (RKE). L-serine is bound at residue Glu-283. Residue 347-350 (EISS) participates in ATP binding. Ser-383 is a binding site for L-serine.

This sequence belongs to the class-II aminoacyl-tRNA synthetase family. Type-1 seryl-tRNA synthetase subfamily. As to quaternary structure, homodimer. The tRNA molecule binds across the dimer.

It is found in the cytoplasm. It catalyses the reaction tRNA(Ser) + L-serine + ATP = L-seryl-tRNA(Ser) + AMP + diphosphate + H(+). It carries out the reaction tRNA(Sec) + L-serine + ATP = L-seryl-tRNA(Sec) + AMP + diphosphate + H(+). The protein operates within aminoacyl-tRNA biosynthesis; selenocysteinyl-tRNA(Sec) biosynthesis; L-seryl-tRNA(Sec) from L-serine and tRNA(Sec): step 1/1. Its function is as follows. Catalyzes the attachment of serine to tRNA(Ser). Is also able to aminoacylate tRNA(Sec) with serine, to form the misacylated tRNA L-seryl-tRNA(Sec), which will be further converted into selenocysteinyl-tRNA(Sec). The protein is Serine--tRNA ligase of Citrifermentans bemidjiense (strain ATCC BAA-1014 / DSM 16622 / JCM 12645 / Bem) (Geobacter bemidjiensis).